Consider the following 373-residue polypeptide: tRNA-specific 2-thiouridylase MnmA (373 aa).

Residues 12-19 (GMSGGVDS) and methionine 38 contribute to the ATP site. The segment at 98–100 (NPD) is interaction with target base in tRNA. The Nucleophile role is filled by cysteine 103. The cysteines at positions 103 and 200 are disulfide-linked. Glycine 127 contributes to the ATP binding site. The interval 150-152 (KDQ) is interaction with tRNA. The Cysteine persulfide intermediate role is filled by cysteine 200. The segment at 312–313 (RY) is interaction with tRNA.

The protein belongs to the MnmA/TRMU family.

Its subcellular location is the cytoplasm. The enzyme catalyses S-sulfanyl-L-cysteinyl-[protein] + uridine(34) in tRNA + AH2 + ATP = 2-thiouridine(34) in tRNA + L-cysteinyl-[protein] + A + AMP + diphosphate + H(+). Its function is as follows. Catalyzes the 2-thiolation of uridine at the wobble position (U34) of tRNA, leading to the formation of s(2)U34. The chain is tRNA-specific 2-thiouridylase MnmA from Streptococcus pneumoniae (strain ATCC BAA-255 / R6).